Here is a 61-residue protein sequence, read N- to C-terminus: Large ribosomal subunit protein eL37 (61 aa).

Zn(2+) is bound by residues Cys-19, Cys-22, Cys-34, and Cys-37. A C4-type zinc finger spans residues 19–37 (CRRCGRNSFNARKGYCAAC).

Belongs to the eukaryotic ribosomal protein eL37 family. Zn(2+) serves as cofactor.

Binds to the 23S rRNA. The protein is Large ribosomal subunit protein eL37 of Sulfolobus acidocaldarius (strain ATCC 33909 / DSM 639 / JCM 8929 / NBRC 15157 / NCIMB 11770).